We begin with the raw amino-acid sequence, 194 residues long: Mitochondrial import inner membrane translocase subunit Tim22 (194 aa).

Intrachain disulfides connect Cys-69–Cys-141 and Cys-160–Cys-179. Helical transmembrane passes span 74–94 (ALACVGGFVLGGAFGVFTAGI), 123–143 (MSYAKNFAIVGAMFSCTECLV), and 170–190 (AGLKAGVIGCGGFAAFSAAID).

Belongs to the Tim17/Tim22/Tim23 family. Component of the TIM22 complex, whose core is composed of TIMM22, associated with peripheral protein FXC1/TIMM10B and the 70 kDa heterohexamer. In most cases, the 70 kDa complex is composed of TIMM9 and TIMM10 (TIMM10A or TIMM10B). A small fraction of the 70 kDa complex is composed of TIMM8 (TIMM8A/DDP1 or TIMM8B/DDP2) and TIMM13. The TIM22 complex also contains AGK and TIMM29. Interacts directly with TIMM9, TIMM10A and FXC1/TIMM10B. Interacts (when oxidized) with TIMM29; interaction is direct. Post-translationally, disulfide bonds promote efficient assembly of the TIM22 complex.

Its subcellular location is the mitochondrion inner membrane. Its function is as follows. Essential core component of the TIM22 complex, a complex that mediates the import and insertion of multi-pass transmembrane proteins into the mitochondrial inner membrane. In the TIM22 complex, it constitutes the voltage-activated and signal-gated channel. Forms a twin-pore translocase that uses the membrane potential as external driving force in 2 voltage-dependent steps. The protein is Mitochondrial import inner membrane translocase subunit Tim22 (TIMM22) of Bos taurus (Bovine).